A 584-amino-acid chain; its full sequence is MTHMPARPVDGAEPLSALPAGPMRQAGTQRSGIYEISKVLTAPARLEITLANVVNVLSSFLQIRCGAIVVLDAEGQPEIAATGDIPPSSQSAARGVIPKAVIDHIATTGMPLIVKDVSKSELFQAEPQPPWSSGTVPISFIGVPVKADNKILGTISIDRVRNDAAPFPADEDVRFLTMVANLVSRTIRLHRFLNLEGRRPIGEQERPEKPIIAQRGAPGRHPPVKIDGIIGDSPALQQVVETVSVVARTNSTVLLRGESGTGKEFFAQAIHELSPRKNKPFVKLNCAALPEGVLESELFGHEKGAFTGAIAQRAGRFELANGGTLLLDEIGEISPAFQAKLLRVLQEGELERVGGTKTLAVDVRLICATNKNLEMAVANAEFRADLYYRISVVPIVLPPLRERPGDIPRLANALLDRFNKENQRELTFSSSAIEVMSQCYFPGNVRELENCVRRTATLARSSSIVSSDFACKNSQCLSSLLWKTDGSPGGITVDGHARSNVMPTSSPRSGGSIGASDEVSSVKACDPHGSGCPAMESRLTQRDRLIEAMEKAGWVQAKAARILGLTPRQVGYALRQHRIEVKKL.

Residues 1–24 form a disordered region; sequence MTHMPARPVDGAEPLSALPAGPMR. In terms of domain architecture, GAF spans 45–187; that stretch reads RLEITLANVV…MVANLVSRTI (143 aa). In terms of domain architecture, Sigma-54 factor interaction spans 229 to 457; that stretch reads IIGDSPALQQ…LENCVRRTAT (229 aa). ATP contacts are provided by residues 257–264 and 320–329; these read GESGTGKE and ANGGTLLLDE. Positions 458 to 541 are inter-domain linker; sequence LARSSSIVSS…CPAMESRLTQ (84 aa). The a divalent metal cation site is built by cysteine 471 and cysteine 476. Residues 495-518 are disordered; it reads GHARSNVMPTSSPRSGGSIGASDE. The segment at 542-584 is C-terminal DNA-binding domain; that stretch reads RDRLIEAMEKAGWVQAKAARILGLTPRQVGYALRQHRIEVKKL. Residues 556-575 constitute a DNA-binding region (H-T-H motif); that stretch reads QAKAARILGLTPRQVGYALR.

As to quaternary structure, interacts with sigma-54.

In terms of biological role, required for activation of most nif operons, which are directly involved in nitrogen fixation. This chain is Nif-specific regulatory protein (nifA), found in Rhizobium etli (strain ATCC 51251 / DSM 11541 / JCM 21823 / NBRC 15573 / CFN 42).